Here is a 528-residue protein sequence, read N- to C-terminus: MCQAGEDYAGPAQREPPPVPRPSREQKCVKCAEGLPVVVIRAGDAFCRDCFKAFYVHKFRAMLGKNRVIFPGEKVLLSWSGGPSSSSMVWQVLEGLSQDSAKRLRFVPGVIYVDEGAACGQSLEDRVKTLAEVKRILGNTGFPFHVVALEEVFSLPPSVLRRASQEPAGTEEAYKAAVDSFLQQQHVLGTEACASPAQGQGQLRPSHSQEPSGTVGHPKDAQTEALSRLFKSIKTLTAKEELLQTLRTHLTVHVARSHGYRKVMTGESCTRLAIKLMTNLAMGRGAFLAWDTGFSDERHGDVVLVRPMRDHTLKEVAFYNRLFGVPSVFTPAIDTKAPEKASIHRLMEAFILKLQTLFPSTVSTVYRTSEKLVKAPREGCATGPSGPNCLLCMCALDVDNADSATAFGAQSSSHLSQMLTAEAGTPTRPCCGAGEGQTQSCHRAVGRREDAWACIIEQLCYSCRVNMKDLPSLDPLPPYVLTEAQLRSQRGSVSEEIQEYLIEEEEEEDRAEPCEAMKQEAEDKGIGL.

2 disordered regions span residues 1–23 (MCQAGEDYAGPAQREPPPVPRPS) and 196–219 (PAQGQGQLRPSHSQEPSGTVGHPK). Position 2 is an N-acetylcysteine (Cys2). The segment covering 197–212 (AQGQGQLRPSHSQEPS) has biased composition (polar residues). A Phosphoserine modification is found at Ser416. The interval 504-528 (EEEEEDRAEPCEAMKQEAEDKGIGL) is disordered. Positions 511 to 528 (AEPCEAMKQEAEDKGIGL) are enriched in basic and acidic residues.

Belongs to the CTU2/NCS2 family. In terms of assembly, component of a complex at least composed of URM1, CTU2/NCS2 and CTU1/ATPBD3.

It localises to the cytoplasm. It participates in tRNA modification; 5-methoxycarbonylmethyl-2-thiouridine-tRNA biosynthesis. Functionally, plays a central role in 2-thiolation of mcm(5)S(2)U at tRNA wobble positions of tRNA(Lys), tRNA(Glu) and tRNA(Gln). May act by forming a heterodimer with CTU1/ATPBD3 that ligates sulfur from thiocarboxylated URM1 onto the uridine of tRNAs at wobble position. The chain is Cytoplasmic tRNA 2-thiolation protein 2 (Ctu2) from Rattus norvegicus (Rat).